A 414-amino-acid polypeptide reads, in one-letter code: Putative nickel insertion protein (414 aa).

The tract at residues 70-91 (ATHHDHDHSQDQTHHHHADHAP) is disordered.

It belongs to the LarC family.

The chain is Putative nickel insertion protein from Picosynechococcus sp. (strain ATCC 27264 / PCC 7002 / PR-6) (Agmenellum quadruplicatum).